Consider the following 218-residue polypeptide: Small ribosomal subunit protein uS3c (218 aa).

Positions 47-118 (VQKNMRTSSG…KLNIAVTRIA (72 aa)) constitute a KH type-2 domain.

This sequence belongs to the universal ribosomal protein uS3 family. In terms of assembly, part of the 30S ribosomal subunit.

It is found in the plastid. The protein resides in the chloroplast. This chain is Small ribosomal subunit protein uS3c (rps3), found in Solanum lycopersicum (Tomato).